Here is a 60-residue protein sequence, read N- to C-terminus: Large ribosomal subunit protein bL32 (60 aa).

Positions 1-28 are disordered; sequence MAVQQNKKSRSARDMRRSHDALEASTLS. Residues 11–22 are compositionally biased toward basic and acidic residues; sequence SARDMRRSHDAL.

It belongs to the bacterial ribosomal protein bL32 family.

The sequence is that of Large ribosomal subunit protein bL32 from Pseudomonas savastanoi pv. phaseolicola (strain 1448A / Race 6) (Pseudomonas syringae pv. phaseolicola (strain 1448A / Race 6)).